The primary structure comprises 1640 residues: Clathrin heavy chain 2 (1640 aa).

An N-acetylalanine modification is found at Ala-2. The globular terminal domain stretch occupies residues 2-479; that stretch reads AQILPVRFQE…TDPMLALSVY (478 aa). WD40-like repeat stretches follow at residues 24 to 67, 68 to 107, 108 to 149, 150 to 195, 196 to 257, 258 to 301, and 302 to 330; these read NIGF…RPIS, AESAIMNPASKVIALKAGKTLQIFNIEMKSKMKAHTMAEE, VIFW…TSLV, GCQV…QPIE, GHAA…PEAQ, NDFP…ISAD, and TIFVTAPHKPTSGIIGVNKKGQVLSVCVE. Phosphoserine is present on Ser-67. Residue Tyr-184 is modified to Phosphotyrosine. The residue at position 394 (Thr-394) is a Phosphothreonine. The interval 449 to 465 is binding site for the uncoating ATPase, involved in lattice disassembly; sequence EKWLKEDKLECSEELGD. The interval 480–523 is flexible linker; sequence LRANVPSKVIQCFAETGQFQKIVLYAKKVGYTPDWIFLLRGVMK. Residues 524 to 634 form a distal segment region; sequence ISPEQGLQFS…QALEHYTDLY (111 aa). Residues 524–1640 are heavy chain arm; that stretch reads ISPEQGLQFS…PLVFDFDGHE (1117 aa). CHCR repeat units follow at residues 537-683, 686-828, 833-972, 979-1124, 1128-1269, 1274-1420, and 1423-1566; these read VQDE…QLCV, ASKY…SEEV, IMAV…QLID, LSET…VKEA, YIRG…FRFA, LHIV…LLIN, and LLVL…RECF. Residue Tyr-634 is modified to Phosphotyrosine. Residues 639 to 1640 are proximal segment; the sequence is AVVHTHLLNP…PLVFDFDGHE (1002 aa). Lys-737 is subject to N6-succinyllysine. Lys-856 is modified (N6-acetyllysine). Tyr-899 carries the phosphotyrosine modification. Phosphoserine is present on Ser-1167. Tyr-1206 carries the post-translational modification Phosphotyrosine. The interval 1213-1522 is involved in binding clathrin light chain; it reads AAKLLYSNVS…YLYKGNNWWA (310 aa). Ser-1229 bears the Phosphoserine mark. An N6-acetyllysine; alternate modification is found at Lys-1441. Position 1441 is an N6-succinyllysine; alternate (Lys-1441). Residues Tyr-1477 and Tyr-1487 each carry the phosphotyrosine modification. At Ser-1494 the chain carries Phosphoserine. Lys-1501 carries the N6-acetyllysine modification. The trimerization stretch occupies residues 1551–1640; the sequence is QKLLQWFLEE…PLVFDFDGHE (90 aa).

The protein belongs to the clathrin heavy chain family. In terms of assembly, clathrin triskelions, composed of 3 heavy chains and 3 light chains, are the basic subunits of the clathrin coat. In the presence of light chains, hub assembly is influenced by both the pH and the concentration of calcium. May interact with OCRL. Interacts with AFTPH/aftiphilin. As to expression, maximal levels in skeletal muscle. High levels in heart and testis. Low expression detected in all other tissues.

Its subcellular location is the cytoplasmic vesicle membrane. It is found in the membrane. It localises to the coated pit. In terms of biological role, clathrin is the major protein of the polyhedral coat of coated pits and vesicles. Two different adapter protein complexes link the clathrin lattice either to the plasma membrane or to the trans-Golgi network. This chain is Clathrin heavy chain 2 (CLTCL1), found in Homo sapiens (Human).